A 906-amino-acid polypeptide reads, in one-letter code: Alanine--tRNA ligase (906 aa).

4 residues coordinate Zn(2+): His-570, His-574, Cys-674, and His-678.

It belongs to the class-II aminoacyl-tRNA synthetase family. It depends on Zn(2+) as a cofactor.

Its subcellular location is the cytoplasm. The catalysed reaction is tRNA(Ala) + L-alanine + ATP = L-alanyl-tRNA(Ala) + AMP + diphosphate. In terms of biological role, catalyzes the attachment of alanine to tRNA(Ala) in a two-step reaction: alanine is first activated by ATP to form Ala-AMP and then transferred to the acceptor end of tRNA(Ala). Also edits incorrectly charged Ser-tRNA(Ala) and Gly-tRNA(Ala) via its editing domain. This is Alanine--tRNA ligase from Ureaplasma parvum serovar 3 (strain ATCC 27815 / 27 / NCTC 11736).